The chain runs to 476 residues: Protein DETOXIFICATION 1 (476 aa).

12 consecutive transmembrane segments (helical) span residues 35-55, 66-86, 117-137, 146-166, 184-204, 208-228, 260-280, 289-309, 331-351, 370-390, 402-422, and 433-453; these read AAPM…SVMV, GVAL…CGLV, IPIC…LISL, IAGS…IVIP, AVTT…LFGL, GPAM…SCYV, AAMI…SGLL, VLSI…GVAA, VLAG…LLFT, VADL…TAVL, IGAW…GIYL, and LWCG…IVTA.

It belongs to the multi antimicrobial extrusion (MATE) (TC 2.A.66.1) family. Ubiquitous. Highest expression in flowers and stems.

The protein localises to the cell membrane. Its function is as follows. Efflux carrier for plant-derived alkaloids, antibiotics, heavy metal and other toxic compounds. Involved in cadmium detoxification. Requires probably a proton-motive force for the efflux. The chain is Protein DETOXIFICATION 1 from Arabidopsis thaliana (Mouse-ear cress).